A 212-amino-acid polypeptide reads, in one-letter code: Thymidylate kinase (212 aa).

Residue 10 to 17 (GIDGCGKT) coordinates ATP.

It belongs to the thymidylate kinase family.

It carries out the reaction dTMP + ATP = dTDP + ADP. Its function is as follows. Phosphorylation of dTMP to form dTDP in both de novo and salvage pathways of dTTP synthesis. The sequence is that of Thymidylate kinase from Prochlorococcus marinus (strain MIT 9301).